The sequence spans 451 residues: tRNA-2-methylthio-N(6)-dimethylallyladenosine synthase (451 aa).

Residues 2–119 (QNLYIKTYGC…LPDLLDACLA (118 aa)) enclose the MTTase N-terminal domain. [4Fe-4S] cluster contacts are provided by Cys11, Cys48, Cys82, Cys157, Cys161, and Cys164. Residues 143–377 (GRDGATAFVT…RINGLAQGYA (235 aa)) form the Radical SAM core domain. The region spanning 378-441 (QALVGTQQAV…PNSLRGRAAL (64 aa)) is the TRAM domain.

The protein belongs to the methylthiotransferase family. MiaB subfamily. As to quaternary structure, monomer. The cofactor is [4Fe-4S] cluster.

The protein localises to the cytoplasm. It carries out the reaction N(6)-dimethylallyladenosine(37) in tRNA + (sulfur carrier)-SH + AH2 + 2 S-adenosyl-L-methionine = 2-methylsulfanyl-N(6)-dimethylallyladenosine(37) in tRNA + (sulfur carrier)-H + 5'-deoxyadenosine + L-methionine + A + S-adenosyl-L-homocysteine + 2 H(+). In terms of biological role, catalyzes the methylthiolation of N6-(dimethylallyl)adenosine (i(6)A), leading to the formation of 2-methylthio-N6-(dimethylallyl)adenosine (ms(2)i(6)A) at position 37 in tRNAs that read codons beginning with uridine. The protein is tRNA-2-methylthio-N(6)-dimethylallyladenosine synthase of Acidithiobacillus ferrooxidans (strain ATCC 23270 / DSM 14882 / CIP 104768 / NCIMB 8455) (Ferrobacillus ferrooxidans (strain ATCC 23270)).